The following is a 288-amino-acid chain: Serine/threonine-protein acetyltransferase YopJ (288 aa).

Active-site residues include His109 and Glu128. His109 is a CoA binding site. 167 to 168 (RS) is a binding site for CoA. Cys172 is a catalytic residue. 1D-myo-inositol hexakisphosphate-binding positions include 182 to 185 (KLYI) and 224 to 225 (KH). 227–230 (QGKK) contributes to the CoA binding site. Arg257 provides a ligand contact to 1D-myo-inositol hexakisphosphate. 266 to 270 (DGKEL) contributes to the CoA binding site.

The protein belongs to the acetyltransferase YopJ family. It depends on 1D-myo-inositol hexakisphosphate as a cofactor.

The protein resides in the secreted. It carries out the reaction L-threonyl-[protein] + acetyl-CoA = O-acetyl-L-threonyl-[protein] + CoA. The catalysed reaction is L-seryl-[protein] + acetyl-CoA = O-acetyl-L-seryl-[protein] + CoA. Its activity is regulated as follows. 1D-myo-inositol hexakisphosphate activates protein-acetyltransferase activity via an allosteric mechanism: 1D-myo-inositol hexakisphosphate-binding induces a conformational rearrangement that stimulates the interaction with acetyl-CoA. Functionally, serine/threonine-protein acetyltransferase translocated into infected cells, which inhibits the host immune response and induces cell death by mediating acetylation of target proteins. Inhibits the MAPK and NF-kappa-B signaling pathways by acetylating protein-kinases such as MAP2K1, MAP2K6, MAP3K7/TAK1 and I-kappa-B kinase (CHUK/IKKA and IKBKB) on serine and threonine residues critical for their activation by phosphorylation, thereby preventing protein-kinase activation. Promotes pyroptosis, a programmed cell death, in host cells by mediating acetylation of MAP3K7/TAK1: MAP3K7/TAK1 inactivation triggers activation of caspase-8 (CASP8), followed by CASP8-dependent cleavage of gasdermin-D (GSDMD) and induction of pyroptosis. This is Serine/threonine-protein acetyltransferase YopJ from Yersinia pestis.